The sequence spans 169 residues: MTNGMIRIIGLDPGLRRTGWGVIEAQGTRLTYVACGTILPPENAPMAERLAELHRGLAEVLARHAPDEAAVEETFVNMNPSSTLKLGQARGVVMLAPAQAGLSVAEYAPLLVKKTVVGAGRAEKAQIRMMIGVLLPKATPQTEDAADALAVAVTHAHHRGPAALRRAAL.

Active-site residues include D12, E72, and D144. D12, E72, and D144 together coordinate Mg(2+).

It belongs to the RuvC family. As to quaternary structure, homodimer which binds Holliday junction (HJ) DNA. The HJ becomes 2-fold symmetrical on binding to RuvC with unstacked arms; it has a different conformation from HJ DNA in complex with RuvA. In the full resolvosome a probable DNA-RuvA(4)-RuvB(12)-RuvC(2) complex forms which resolves the HJ. The cofactor is Mg(2+).

It is found in the cytoplasm. The catalysed reaction is Endonucleolytic cleavage at a junction such as a reciprocal single-stranded crossover between two homologous DNA duplexes (Holliday junction).. In terms of biological role, the RuvA-RuvB-RuvC complex processes Holliday junction (HJ) DNA during genetic recombination and DNA repair. Endonuclease that resolves HJ intermediates. Cleaves cruciform DNA by making single-stranded nicks across the HJ at symmetrical positions within the homologous arms, yielding a 5'-phosphate and a 3'-hydroxyl group; requires a central core of homology in the junction. The consensus cleavage sequence is 5'-(A/T)TT(C/G)-3'. Cleavage occurs on the 3'-side of the TT dinucleotide at the point of strand exchange. HJ branch migration catalyzed by RuvA-RuvB allows RuvC to scan DNA until it finds its consensus sequence, where it cleaves and resolves the cruciform DNA. The protein is Crossover junction endodeoxyribonuclease RuvC of Azorhizobium caulinodans (strain ATCC 43989 / DSM 5975 / JCM 20966 / LMG 6465 / NBRC 14845 / NCIMB 13405 / ORS 571).